Consider the following 236-residue polypeptide: Phosphoribosylaminoimidazole-succinocarboxamide synthase (236 aa).

This sequence belongs to the SAICAR synthetase family.

It catalyses the reaction 5-amino-1-(5-phospho-D-ribosyl)imidazole-4-carboxylate + L-aspartate + ATP = (2S)-2-[5-amino-1-(5-phospho-beta-D-ribosyl)imidazole-4-carboxamido]succinate + ADP + phosphate + 2 H(+). It participates in purine metabolism; IMP biosynthesis via de novo pathway; 5-amino-1-(5-phospho-D-ribosyl)imidazole-4-carboxamide from 5-amino-1-(5-phospho-D-ribosyl)imidazole-4-carboxylate: step 1/2. This Hahella chejuensis (strain KCTC 2396) protein is Phosphoribosylaminoimidazole-succinocarboxamide synthase.